The following is a 349-amino-acid chain: UPF0283 membrane protein Ent638_2153 (349 aa).

A run of 3 helical transmembrane segments spans residues 70-90 (MVTAGLTLFGISVVGQGVQWT), 99-119 (WVALGGCAAGALIIGAGVGSV), and 213-233 (ESTLMIAVSPLALVDMAFIAW).

The protein belongs to the UPF0283 family.

Its subcellular location is the cell inner membrane. In Enterobacter sp. (strain 638), this protein is UPF0283 membrane protein Ent638_2153.